The following is a 357-amino-acid chain: Putative minor fimbrial subunit PmfE (357 aa).

The signal sequence occupies residues 1–28; it reads MILNKKNIHSKSVMLFCAGIVSLMPLHA.

It is found in the fimbrium. The protein is Putative minor fimbrial subunit PmfE (pmfE) of Proteus mirabilis (strain HI4320).